A 273-amino-acid chain; its full sequence is 4-hydroxy-tetrahydrodipicolinate reductase (273 aa).

Residues 12-17 (GAGGRM) and Glu38 contribute to the NAD(+) site. Arg39 provides a ligand contact to NADP(+). NAD(+)-binding positions include 102-104 (GTT) and 126-129 (AANF). The active-site Proton donor/acceptor is His159. His160 contacts (S)-2,3,4,5-tetrahydrodipicolinate. The active-site Proton donor is Lys163. 169–170 (GT) is a (S)-2,3,4,5-tetrahydrodipicolinate binding site.

This sequence belongs to the DapB family. As to quaternary structure, homotetramer.

It localises to the cytoplasm. The enzyme catalyses (S)-2,3,4,5-tetrahydrodipicolinate + NAD(+) + H2O = (2S,4S)-4-hydroxy-2,3,4,5-tetrahydrodipicolinate + NADH + H(+). The catalysed reaction is (S)-2,3,4,5-tetrahydrodipicolinate + NADP(+) + H2O = (2S,4S)-4-hydroxy-2,3,4,5-tetrahydrodipicolinate + NADPH + H(+). Its pathway is amino-acid biosynthesis; L-lysine biosynthesis via DAP pathway; (S)-tetrahydrodipicolinate from L-aspartate: step 4/4. Catalyzes the conversion of 4-hydroxy-tetrahydrodipicolinate (HTPA) to tetrahydrodipicolinate. This chain is 4-hydroxy-tetrahydrodipicolinate reductase, found in Proteus mirabilis (strain HI4320).